Consider the following 145-residue polypeptide: uncharacterized protein (145 aa).

This is an uncharacterized protein from Frog virus 3 (isolate Goorha) (FV-3).